The following is a 945-amino-acid chain: Soluble guanylate cyclase gcy-33 (945 aa).

A heme-binding site is contributed by histidine 104. Positions 388-413 (SEVLTEMTREISEAKKTARTLLTQMM) form a coiled coil. The Guanylate cyclase domain maps to 437–567 (SIGFIRVCDF…DTVNTASRME (131 aa)). Disordered stretches follow at residues 639-679 (KEAE…LSGS) and 706-930 (QDEN…KCED). Positions 661-679 (SLGESIDSSSSRRGSLSGS) are enriched in low complexity. A compositionally biased stretch (polar residues) spans 711–720 (RPPTWSASHS). Residues 721–731 (QDIRKPRKTES) show a composition bias toward basic and acidic residues. Positions 732-744 (KITLNSRLSSSDL) are enriched in polar residues. Basic and acidic residues-rich tracts occupy residues 750–759 (ETSKDSDGET) and 766–804 (ELKE…DHVS). Residues 763 to 802 (TSSELKEVNRIREEALAQEKEEERTTKEENQKIEEVGEDH) adopt a coiled-coil conformation. Residues 817-828 (GDNNISFSQMPS) show a composition bias toward polar residues. Positions 851–861 (ISKKKLEKEDS) are enriched in basic and acidic residues. Residues 862–884 (NSSMSSLDERTTVSAKPTTTRRL) are compositionally biased toward polar residues. A compositionally biased stretch (basic and acidic residues) spans 886-896 (NQKDLEKEKKR). Residues 898–911 (SMAGSSVTSSSAHS) show a composition bias toward low complexity. Basic and acidic residues predominate over residues 916–930 (SKKDTRDKSRCKCED).

This sequence belongs to the adenylyl cyclase class-4/guanylyl cyclase family. In terms of assembly, heterodimer; with other soluble guanylate cyclases. The cofactor is heme. As to expression, expressed in BAG sensory neuron.

It localises to the cytoplasm. The enzyme catalyses GTP = 3',5'-cyclic GMP + diphosphate. With respect to regulation, may be regulated by molecular oxygen. Probably not activated by nitric oxide (NO). Functionally, synthesizes cyclic GMP (cGMP) from GTP. May be involved in sensitivity to quinine by regulating egl-4 activity through the production of cGMP. In Caenorhabditis elegans, this protein is Soluble guanylate cyclase gcy-33 (gcy-33).